Here is an 883-residue protein sequence, read N- to C-terminus: Valine--tRNA ligase (883 aa).

Residues 46–56 (PNVTGKLHLGH) carry the 'HIGH' region motif. A 'KMSKS' region motif is present at residues 520 to 524 (KMSKS). Lysine 523 provides a ligand contact to ATP. Positions 809 to 883 (LADLLNVEEE…RIKEMEKLIK (75 aa)) form a coiled coil.

Belongs to the class-I aminoacyl-tRNA synthetase family. ValS type 1 subfamily. Monomer.

It localises to the cytoplasm. The enzyme catalyses tRNA(Val) + L-valine + ATP = L-valyl-tRNA(Val) + AMP + diphosphate. In terms of biological role, catalyzes the attachment of valine to tRNA(Val). As ValRS can inadvertently accommodate and process structurally similar amino acids such as threonine, to avoid such errors, it has a 'posttransfer' editing activity that hydrolyzes mischarged Thr-tRNA(Val) in a tRNA-dependent manner. This is Valine--tRNA ligase from Streptococcus mutans serotype c (strain ATCC 700610 / UA159).